Reading from the N-terminus, the 498-residue chain is MLSNLLILPMLLPFLCALILVFLKNNDRISKYLYLGTMTITTIISLMLLIYVQRHRPITLDFGGWSAPFGIQFLGDSLSLIMVTTASFVITLIMAYGFGRGEHKANRYHLPSFILFLSVGVIGSFLTSDLFNLYVMFEIMLLASFVLITLGQSVEQLRAAIIYVVLNIIGSWLFLLGIGLLYKTVGTLNFSHIAMRLNDMGDNRTVTMISLIFLVAFSAKAALVLFMWLPKAYAVLNTELAALFAALMTKVGAYALIRFFTLLFDQHNDLIHPLLATMAAITMVIGAIGVIAYKDIKKIAAYQVIISIGFIILGLGTNTFAGINGAIFYLVNDIVVKTLLFFIIGSLVYITGYRQYQYLNGLAKKEPLFGVAFIIMIFAIGGVPPFSGFPGKVLIFQGALQNGNYIGLALMIITSLIAMYSLFRILFYMYFGDKDGEEVNFKKIPLYRKRILSILVVVVIAIGIAAPVVLNVTSDATELNTSDQLYQKLVNPHLKGED.

Transmembrane regions (helical) follow at residues 2 to 22 (LSNLLILPMLLPFLCALILVF), 32 to 52 (YLYLGTMTITTIISLMLLIYV), 78 to 98 (LSLIMVTTASFVITLIMAYGF), 108 to 128 (YHLPSFILFLSVGVIGSFLTS), 130 to 150 (LFNLYVMFEIMLLASFVLITL), 161 to 181 (IIYVVLNIIGSWLFLLGIGLL), 209 to 229 (ISLIFLVAFSAKAALVLFMWL), 240 to 260 (LAALFAALMTKVGAYALIRFF), 271 to 291 (IHPLLATMAAITMVIGAIGVI), 308 to 328 (IGFIILGLGTNTFAGINGAIF), 330 to 350 (LVNDIVVKTLLFFIIGSLVYI), 369 to 389 (FGVAFIIMIFAIGGVPPFSGF), 403 to 423 (GNYIGLALMIITSLIAMYSLF), and 451 to 471 (ILSILVVVVIAIGIAAPVVLN).

This sequence belongs to the CPA3 antiporters (TC 2.A.63) subunit D family. In terms of assembly, may form a heterooligomeric complex that consists of seven subunits: mnhA2, mnhB2, mnhC2, mnhD2, mnhE2, mnhF2 and mnhG2.

Its subcellular location is the cell membrane. This Staphylococcus aureus (strain JH1) protein is Putative antiporter subunit mnhD2 (mnhD2).